Reading from the N-terminus, the 258-residue chain is Deoxyribose-phosphate aldolase (258 aa).

The Proton donor/acceptor role is filled by Asp101. The Schiff-base intermediate with acetaldehyde role is filled by Lys166. Lys200 (proton donor/acceptor) is an active-site residue.

Belongs to the DeoC/FbaB aldolase family. DeoC type 2 subfamily.

The protein localises to the cytoplasm. It catalyses the reaction 2-deoxy-D-ribose 5-phosphate = D-glyceraldehyde 3-phosphate + acetaldehyde. The protein operates within carbohydrate degradation; 2-deoxy-D-ribose 1-phosphate degradation; D-glyceraldehyde 3-phosphate and acetaldehyde from 2-deoxy-alpha-D-ribose 1-phosphate: step 2/2. Functionally, catalyzes a reversible aldol reaction between acetaldehyde and D-glyceraldehyde 3-phosphate to generate 2-deoxy-D-ribose 5-phosphate. The polypeptide is Deoxyribose-phosphate aldolase (Actinobacillus pleuropneumoniae serotype 5b (strain L20)).